Reading from the N-terminus, the 30-residue chain is Trypsin inhibitor 7 (30 aa).

3 cysteine pairs are disulfide-bonded: Cys4–Cys21, Cys11–Cys23, and Cys17–Cys29.

It belongs to the protease inhibitor I7 (squash-type serine protease inhibitor) family.

Its subcellular location is the secreted. Functionally, strongly inhibits trypsin, weakly inhibits chymotrypsin. The chain is Trypsin inhibitor 7 from Cyclanthera pedata (Achocha).